The sequence spans 314 residues: Flotillin-like protein FloA (314 aa).

The chain crosses the membrane as a helical span at residues 4–24 (IGPIIIAVLIIIFLIVFFTLV).

Belongs to the flotillin-like FloA family. As to quaternary structure, homooligomerizes.

The protein localises to the cell membrane. The protein resides in the membrane raft. In terms of biological role, found in functional membrane microdomains (FMM) that may be equivalent to eukaryotic membrane rafts. FMMs are highly dynamic and increase in number as cells age. Flotillins are thought to be important factors in membrane fluidity. The protein is Flotillin-like protein FloA of Listeria innocua serovar 6a (strain ATCC BAA-680 / CLIP 11262).